Here is a 520-residue protein sequence, read N- to C-terminus: DNA-(apurinic or apyrimidinic site) endonuclease 2 (520 aa).

Glu59 lines the Mg(2+) pocket. Tyr181 is a catalytic residue. Mg(2+) contacts are provided by Asp222, Asn224, and Asp353. Residue Asp222 is the Proton donor/acceptor of the active site. Zn(2+)-binding residues include Cys476, His478, Cys500, and Cys514. Residues 476–520 (CRHGEESMLKTSKTSANPGRKFWICKRSRGDSNNTESSCGFFQWV) form a GRF-type zinc finger.

The protein belongs to the DNA repair enzymes AP/ExoA family. Mg(2+) is required as a cofactor. It depends on Mn(2+) as a cofactor.

It is found in the nucleus. It carries out the reaction Exonucleolytic cleavage in the 3'- to 5'-direction to yield nucleoside 5'-phosphates.. DNA repair enzyme that cleaves apurinic/apyrimidinic (AP) sites and removes 3'-blocking groups present at single strand breaks of damaged DNA. This is DNA-(apurinic or apyrimidinic site) endonuclease 2 (APN2) from Saccharomyces cerevisiae (strain ATCC 204508 / S288c) (Baker's yeast).